The following is a 492-amino-acid chain: Probable endopolygalacturonase D (492 aa).

The signal sequence occupies residues 1-16; it reads MKRSALILSFLPLVFG. Cysteine 151 and cysteine 166 are oxidised to a cystine. PbH1 repeat units follow at residues 216-238, 258-280, 281-319, and 320-341; these read GTSV…AYWD, MYNS…EIES, TEHL…DIKE, and SSYF…AVTS. Residue asparagine 292 is glycosylated (N-linked (GlcNAc...) asparagine). Aspartate 334 acts as the Proton donor in catalysis. Cysteine 336 and cysteine 352 form a disulfide bridge. Histidine 356 is an active-site residue. 3 PbH1 repeats span residues 371 to 392, 400 to 422, and 434 to 478; these read VNGV…RIKT, VYNI…DVQQ, and TNGV…SITG. N-linked (GlcNAc...) asparagine glycans are attached at residues asparagine 407 and asparagine 441. Cystine bridges form between cysteine 461–cysteine 466 and cysteine 484–cysteine 491.

Belongs to the glycosyl hydrolase 28 family.

The protein resides in the secreted. The catalysed reaction is (1,4-alpha-D-galacturonosyl)n+m + H2O = (1,4-alpha-D-galacturonosyl)n + (1,4-alpha-D-galacturonosyl)m.. Its function is as follows. Involved in maceration and soft-rotting of plant tissue. Hydrolyzes the 1,4-alpha glycosidic bonds of de-esterified pectate in the smooth region of the plant cell wall. The polypeptide is Probable endopolygalacturonase D (pgaD) (Aspergillus oryzae (strain ATCC 42149 / RIB 40) (Yellow koji mold)).